We begin with the raw amino-acid sequence, 1295 residues long: Phosphoribosylformylglycinamidine synthase (1295 aa).

Positions 304 to 326 are disordered; that stretch reads WPGAATGSGGEIRDEGATGRGAK. ATP is bound by residues 306 to 317, 385 to 387, and Ala-677; these read GAATGSGGEIRD and TGY. The Mg(2+) site is built by Asp-678, Glu-717, Asn-721, and Asp-884. A compositionally biased stretch (basic and acidic residues) spans 995–1012; it reads LRDNPESADQEHASRQDD. Residues 995-1017 form a disordered region; that stretch reads LRDNPESADQEHASRQDDNDPGL. The Glutamine amidotransferase type-1 domain occupies 1042 to 1295; it reads VAVLREQGVN…LFRNARKQLG (254 aa). Cys-1135 serves as the catalytic Nucleophile. Residues His-1260 and Glu-1262 contribute to the active site.

It in the N-terminal section; belongs to the FGAMS family. In terms of assembly, monomer.

The protein localises to the cytoplasm. It carries out the reaction N(2)-formyl-N(1)-(5-phospho-beta-D-ribosyl)glycinamide + L-glutamine + ATP + H2O = 2-formamido-N(1)-(5-O-phospho-beta-D-ribosyl)acetamidine + L-glutamate + ADP + phosphate + H(+). It participates in purine metabolism; IMP biosynthesis via de novo pathway; 5-amino-1-(5-phospho-D-ribosyl)imidazole from N(2)-formyl-N(1)-(5-phospho-D-ribosyl)glycinamide: step 1/2. In terms of biological role, phosphoribosylformylglycinamidine synthase involved in the purines biosynthetic pathway. Catalyzes the ATP-dependent conversion of formylglycinamide ribonucleotide (FGAR) and glutamine to yield formylglycinamidine ribonucleotide (FGAM) and glutamate. This chain is Phosphoribosylformylglycinamidine synthase, found in Sodalis glossinidius (strain morsitans).